The sequence spans 447 residues: Na(+)-translocating NADH-quinone reductase subunit A (447 aa).

It belongs to the NqrA family. As to quaternary structure, composed of six subunits; NqrA, NqrB, NqrC, NqrD, NqrE and NqrF.

It catalyses the reaction a ubiquinone + n Na(+)(in) + NADH + H(+) = a ubiquinol + n Na(+)(out) + NAD(+). Functionally, NQR complex catalyzes the reduction of ubiquinone-1 to ubiquinol by two successive reactions, coupled with the transport of Na(+) ions from the cytoplasm to the periplasm. NqrA to NqrE are probably involved in the second step, the conversion of ubisemiquinone to ubiquinol. This chain is Na(+)-translocating NADH-quinone reductase subunit A, found in Saccharophagus degradans (strain 2-40 / ATCC 43961 / DSM 17024).